Consider the following 82-residue polypeptide: Large ribosomal subunit protein bL31B (82 aa).

The protein belongs to the bacterial ribosomal protein bL31 family. Type B subfamily. In terms of assembly, part of the 50S ribosomal subunit.

This chain is Large ribosomal subunit protein bL31B, found in Pectobacterium carotovorum subsp. carotovorum (strain PC1).